A 317-amino-acid polypeptide reads, in one-letter code: D-alanine--D-alanine ligase (317 aa).

Residues 103-299 form the ATP-grasp domain; that stretch reads KHIFRSLNID…FNELVKIIIE (197 aa). Residue 130–183 coordinates ATP; the sequence is KIDYPYVLKPINEGSSIGVYIIFSHEDYLELKDNSSTIMEKMIVEEYIPGIELH. The Mg(2+) site is built by aspartate 251, glutamate 265, and asparagine 267.

Belongs to the D-alanine--D-alanine ligase family. Mg(2+) is required as a cofactor. Requires Mn(2+) as cofactor.

The protein localises to the cytoplasm. The catalysed reaction is 2 D-alanine + ATP = D-alanyl-D-alanine + ADP + phosphate + H(+). The protein operates within cell wall biogenesis; peptidoglycan biosynthesis. Cell wall formation. This is D-alanine--D-alanine ligase from Wolbachia sp. subsp. Drosophila simulans (strain wRi).